Consider the following 424-residue polypeptide: Adenosylmethionine-8-amino-7-oxononanoate aminotransferase (424 aa).

Trp-46 provides a ligand contact to substrate. A pyridoxal 5'-phosphate-binding site is contributed by 106–107 (GS). Substrate is bound at residue Tyr-138. Asp-240 is a pyridoxal 5'-phosphate binding site. 2 residues coordinate substrate: Lys-269 and Gly-303. Residue Lys-269 is modified to N6-(pyridoxal phosphate)lysine. 304–305 (HS) serves as a coordination point for pyridoxal 5'-phosphate. Arg-391 serves as a coordination point for substrate.

This sequence belongs to the class-III pyridoxal-phosphate-dependent aminotransferase family. BioA subfamily. As to quaternary structure, homodimer. Requires pyridoxal 5'-phosphate as cofactor.

The protein resides in the cytoplasm. The catalysed reaction is (8S)-8-amino-7-oxononanoate + S-adenosyl-L-methionine = S-adenosyl-4-methylsulfanyl-2-oxobutanoate + (7R,8S)-7,8-diammoniononanoate. It participates in cofactor biosynthesis; biotin biosynthesis; 7,8-diaminononanoate from 8-amino-7-oxononanoate (SAM route): step 1/1. Catalyzes the transfer of the alpha-amino group from S-adenosyl-L-methionine (SAM) to 7-keto-8-aminopelargonic acid (KAPA) to form 7,8-diaminopelargonic acid (DAPA). It is the only aminotransferase known to utilize SAM as an amino donor. Complements a bioU deletion in Synechocystis PCC 6803. The chain is Adenosylmethionine-8-amino-7-oxononanoate aminotransferase from Synechococcus elongatus (strain ATCC 33912 / PCC 7942 / FACHB-805) (Anacystis nidulans R2).